Here is a 617-residue protein sequence, read N- to C-terminus: Secretogranin-2 (617 aa).

The signal sequence occupies residues 1 to 30 (MAGAKAYRLGAVLLLIHLIFLISGAEAASF). Residue Tyr-153 is modified to Sulfotyrosine. Residues Ser-176 and Ser-270 each carry the phosphoserine modification. 2 stretches are compositionally biased toward basic and acidic residues: residues 261-286 (TQTQEEVRDSKENTEKNEQINEEMKR) and 295-307 (EENRRESKDQLSE). The disordered stretch occupies residues 261–307 (TQTQEEVRDSKENTEKNEQINEEMKRSGQLGLPDEENRRESKDQLSE). Phosphoserine occurs at positions 434, 532, 555, and 556.

The protein belongs to the chromogranin/secretogranin protein family. Interacts with Secretogranin III/SCG3.

The protein localises to the secreted. Functionally, neuroendocrine protein of the granin family that regulates the biogenesis of secretory granules. This is Secretogranin-2 (Scg2) from Mus musculus (Mouse).